The sequence spans 96 residues: Protein Vpr (96 aa).

The interval 1–42 (MEQAPEDQGPQREPHNEWTLELLEEIKNEAVRHFPRVWLHQL) is homooligomerization. Phosphoserine; by host occurs at positions 79, 94, and 96.

This sequence belongs to the HIV-1 VPR protein family. As to quaternary structure, homooligomer, may form homodimer. Interacts with p6-gag region of the Pr55 Gag precursor protein through a (Leu-X-X)4 motif near the C-terminus of the P6gag protein. Interacts with host UNG. May interact with host RAD23A/HHR23A. Interacts with host VPRBP/DCAF1, leading to hijack the CUL4A-RBX1-DDB1-DCAF1/VPRBP complex, mediating ubiquitination of host proteins such as TERT and ZGPAT and arrest of the cell cycle in G2 phase. Phosphorylated on several residues by host. These phosphorylations regulate VPR activity for the nuclear import of the HIV-1 pre-integration complex.

The protein localises to the virion. The protein resides in the host nucleus. It is found in the host extracellular space. Functionally, during virus replication, may deplete host UNG protein, and incude G2-M cell cycle arrest. Acts by targeting specific host proteins for degradation by the 26S proteasome, through association with the cellular CUL4A-DDB1 E3 ligase complex by direct interaction with host VPRPB/DCAF-1. Cell cycle arrest reportedly occurs within hours of infection and is not blocked by antiviral agents, suggesting that it is initiated by the VPR carried into the virion. Additionally, VPR induces apoptosis in a cell cycle dependent manner suggesting that these two effects are mechanistically linked. Detected in the serum and cerebrospinal fluid of AIDS patient, VPR may also induce cell death to bystander cells. Its function is as follows. During virus entry, plays a role in the transport of the viral pre-integration (PIC) complex to the host nucleus. This function is crucial for viral infection of non-dividing macrophages. May act directly at the nuclear pore complex, by binding nucleoporins phenylalanine-glycine (FG)-repeat regions. In Homo sapiens (Human), this protein is Protein Vpr.